Consider the following 336-residue polypeptide: tRNA N6-adenosine threonylcarbamoyltransferase (336 aa).

The Fe cation site is built by His-114 and His-118. Substrate is bound by residues 136-140, Asp-169, Gly-182, Asp-186, and Asn-275; that span reads LVSGG. Residue Asp-302 participates in Fe cation binding.

Belongs to the KAE1 / TsaD family. The cofactor is Fe(2+).

Its subcellular location is the cytoplasm. The catalysed reaction is L-threonylcarbamoyladenylate + adenosine(37) in tRNA = N(6)-L-threonylcarbamoyladenosine(37) in tRNA + AMP + H(+). Functionally, required for the formation of a threonylcarbamoyl group on adenosine at position 37 (t(6)A37) in tRNAs that read codons beginning with adenine. Is involved in the transfer of the threonylcarbamoyl moiety of threonylcarbamoyl-AMP (TC-AMP) to the N6 group of A37, together with TsaE and TsaB. TsaD likely plays a direct catalytic role in this reaction. The protein is tRNA N6-adenosine threonylcarbamoyltransferase of Streptococcus agalactiae serotype III (strain NEM316).